The chain runs to 525 residues: Vesicular inhibitory amino acid transporter (525 aa).

The Cytoplasmic segment spans residues 1-132 (MATLLRSKLS…WNVTNAIQGM (132 aa)). The tract at residues 69-111 (PCGDEGAEPPVEGDIHYQRGSGAPLPPSGSKDQVGAGGEFGGH) is disordered. A helical transmembrane segment spans residues 133-153 (FVLGLPYAILHGGYLGLFLII). At 154–204 (FAAVVCCYTGKILIACLYEENEDGEVVRVRDSYVAIANACCAPRFPTLGGR) the chain is on the lumenal, vesicle side. 3'-nitrotyrosine is present on Tyr186. Residues 205-225 (VVNVAQIIELVMTCILYVVVS) form a helical membrane-spanning segment. Residues 226–265 (GNLMYNSFPGLPVSQKSWSIIATAVLLPCAFLKNLKAVSK) lie on the Cytoplasmic side of the membrane. Residues 266–286 (FSLLCTLAHFVINILVIAYCL) form a helical membrane-spanning segment. Residues 287–305 (SRARDWAWEKVKFYIDVKK) are Lumenal, vesicle-facing. A helical transmembrane segment spans residues 306 to 326 (FPISIGIIVFSYTSQIFLPSL). At 327–341 (EGNMQQPSEFHCMMN) the chain is on the cytoplasmic side. The chain crosses the membrane as a helical span at residues 342–362 (WTHIAACVLKGLFALVAYLTW). At 363-383 (ADETKEVITDNLPGSIRAVVN) the chain is on the lumenal, vesicle side. A helical membrane pass occupies residues 384–404 (IFLVAKALLSYPLPFFAAVEV). Residues 405 to 438 (LEKSLFQEGSRAFFPACYGGDGRLKSWGLTLRCA) lie on the Cytoplasmic side of the membrane. A helical transmembrane segment spans residues 439–459 (LVVFTLLMAIYVPHFALLMGL). Residues 460–461 (TG) are Lumenal, vesicle-facing. The chain crosses the membrane as a helical span at residues 462–482 (SLTGAGLCFLLPSLFHLRLLW). The Cytoplasmic portion of the chain corresponds to 483-489 (RKLLWHQ). Residues 490–510 (VFFDVAIFVIGGICSVSGFVH) traverse the membrane as a helical segment. At 511 to 525 (SLEGLIEAYRTNAED) the chain is on the lumenal, vesicle side.

The protein belongs to the amino acid/polyamine transporter 2 family.

The protein resides in the cytoplasmic vesicle membrane. The protein localises to the presynapse. The enzyme catalyses 4-aminobutanoate(out) + n H(+)(in) = 4-aminobutanoate(in) + n H(+)(out). It carries out the reaction glycine(out) + n H(+)(in) = glycine(in) + n H(+)(out). It catalyses the reaction beta-alanine(out) + n H(+)(in) = beta-alanine(in) + n H(+)(out). Antiporter that exchanges vesicular protons for cytosolic 4-aminobutanoate or to a lesser extend glycine, thus allowing their secretion from nerve terminals. The transport is equally dependent on the chemical and electrical components of the proton gradient. May also transport beta-alanine. Acidification of GABAergic synaptic vesicles is a prerequisite for 4-aminobutanoate uptake. This is Vesicular inhibitory amino acid transporter from Macaca fascicularis (Crab-eating macaque).